The primary structure comprises 331 residues: Laforin (331 aa).

A CBM20 domain is found at 1–124 (MRFRFGVVVP…NNLVDGVYCL (124 aa)). At serine 25 the chain carries Phosphoserine; by AMPK. Residues tryptophan 32, lysine 87, 103-107 (GPHHD), aspartate 197, aspartate 235, and arginine 241 each bind substrate. Residues 156–323 (HYSRILPNIW…EEDFFQKFGK (168 aa)) enclose the Tyrosine-protein phosphatase domain. The active-site Phosphocysteine intermediate is the cysteine 266. The Glucan phosphatase signature motif CXAGXGR motif lies at 266-272 (CNAGVGR). Substrate-binding positions include 267 to 272 (NAGVGR) and tyrosine 304.

Belongs to the protein-tyrosine phosphatase family. As to quaternary structure, homodimer. Interacts with itself. Interacts with PPP1R3B, PPP1R3C, PPP1R3D, HIRIP5, and EPM2AIP1. Binds glycogen and Lafora bodies. Interacts with NHLRC1/malin (via the NHL repeats). Forms a complex with NHLRC1/malin and HSP70. Interacts with PPP1R3D; in the presence of NHLC1/malin the interaction leads to ubiquitination and autophagic degradation of PPP1R3D. Interacts (via the phosphatase domain) with MAPT/Tau; the interaction dephosphorylates MAPT. Interacts with PRDM8. Post-translationally, polyubiquitinated by NHLRC1/malin. In terms of processing, phosphorylation on Ser-25 by AMPK affects the phosphatase activity of the enzyme and its ability to homodimerize and interact with NHLRC1, PPP1R3C or PRKAA2.

The protein resides in the cytoplasm. It is found in the endoplasmic reticulum membrane. It localises to the cell membrane. It carries out the reaction O-phospho-L-tyrosyl-[protein] + H2O = L-tyrosyl-[protein] + phosphate. The catalysed reaction is O-phospho-L-seryl-[protein] + H2O = L-seryl-[protein] + phosphate. The enzyme catalyses O-phospho-L-threonyl-[protein] + H2O = L-threonyl-[protein] + phosphate. In terms of biological role, plays an important role in preventing glycogen hyperphosphorylation and the formation of insoluble aggregates, via its activity as glycogen phosphatase, and by promoting the ubiquitination of proteins involved in glycogen metabolism via its interaction with the E3 ubiquitin ligase NHLRC1/malin. Dephosphorylates phosphotyrosine and synthetic substrates, such as para-nitrophenylphosphate (pNPP), and has low activity with phosphoserine and phosphothreonine substrates (in vitro). Has also been shown to dephosphorylate MAPT. Shows strong phosphatase activity towards complex carbohydrates in vitro, avoiding glycogen hyperphosphorylation which is associated with reduced branching and formation of insoluble aggregates. Forms a complex with NHLRC1/malin and HSP70, which suppresses the cellular toxicity of misfolded proteins by promoting their degradation through the ubiquitin-proteasome system (UPS). Acts as a scaffold protein to facilitate PPP1R3C/PTG ubiquitination by NHLRC1/malin. Also promotes proteasome-independent protein degradation through the macroautophagy pathway. The chain is Laforin (EPM2A) from Canis lupus familiaris (Dog).